The following is a 70-amino-acid chain: Homeobox protein OTX2 (70 aa).

The tract at residues 34 to 70 (HQLPGPGATLSPMGTNAVTSHLNQSPASLSTQGYGAS) is disordered. Residues 45-70 (PMGTNAVTSHLNQSPASLSTQGYGAS) show a composition bias toward polar residues.

The protein belongs to the paired homeobox family. Bicoid subfamily.

It is found in the nucleus. Functionally, transcription factor probably involved in the development of the brain and the sense organs. Can bind to the bicoid/BCD target sequence (BTS): 5'-TCTAATCCC-3'. The protein is Homeobox protein OTX2 (Otx2) of Rattus norvegicus (Rat).